The following is a 211-amino-acid chain: FMN-dependent NADH:quinone oxidoreductase (211 aa).

Residues 17-19 (SYS) and 102-105 (MWNF) contribute to the FMN site.

The protein belongs to the azoreductase type 1 family. Homodimer. FMN is required as a cofactor.

The enzyme catalyses 2 a quinone + NADH + H(+) = 2 a 1,4-benzosemiquinone + NAD(+). It carries out the reaction N,N-dimethyl-1,4-phenylenediamine + anthranilate + 2 NAD(+) = 2-(4-dimethylaminophenyl)diazenylbenzoate + 2 NADH + 2 H(+). Quinone reductase that provides resistance to thiol-specific stress caused by electrophilic quinones. Its function is as follows. Also exhibits azoreductase activity. Catalyzes the reductive cleavage of the azo bond in aromatic azo compounds to the corresponding amines. The chain is FMN-dependent NADH:quinone oxidoreductase from Geobacillus kaustophilus (strain HTA426).